The chain runs to 116 residues: DNA-binding protein Tpen_0471 (116 aa).

It belongs to the PDCD5 family.

This is DNA-binding protein Tpen_0471 from Thermofilum pendens (strain DSM 2475 / Hrk 5).